The primary structure comprises 595 residues: Solute carrier family 13 member 1 (595 aa).

5 helical membrane-spanning segments follow: residues 13-33 (FLLV…IRSK), 40-60 (ILFV…ITAL), 77-97 (VASA…CLAT), 113-133 (VMMV…STAF), and 134-154 (LSMW…VEAV). Asn-174 carries an N-linked (GlcNAc...) asparagine glycan. The segment at 190-218 (QETNERKEKTKPALGSSNDKGKVSSKMET) is disordered. The span at 208-218 (DKGKVSSKMET) shows a compositional bias: basic and acidic residues. Transmembrane regions (helical) follow at residues 239–259 (LMCL…ITGT), 283–303 (SWFL…WIWL), 348–368 (IVTL…DPGF), 381–401 (GYVT…LIPA), 464–484 (PLGS…VTSL), 491–511 (PATI…IHVN), 512–532 (PLHI…LPVA), and 553–573 (AGLG…FTWI). Asn-591 carries an N-linked (GlcNAc...) asparagine glycan.

This sequence belongs to the SLC13A/DASS transporter (TC 2.A.47) family. NADC subfamily. In terms of tissue distribution, kidney and intestine.

It localises to the apical cell membrane. It carries out the reaction sulfate(out) + 3 Na(+)(out) = sulfate(in) + 3 Na(+)(in). The enzyme catalyses selenate(out) + 3 Na(+)(out) = selenate(in) + 3 Na(+)(in). The catalysed reaction is thiosulfate(out) + 3 Na(+)(out) = thiosulfate(in) + 3 Na(+)(in). In terms of biological role, sodium:sulfate symporter that mediates sulfate reabsorption in the kidney and small intestine. Can also mediate the transport of selenate and thiosulfate. The protein is Solute carrier family 13 member 1 (Slc13a1) of Rattus norvegicus (Rat).